The following is a 462-amino-acid chain: Alkaline ceramidase TOD1 (462 aa).

Residues 1–18 (MGKFITTTLSPPLYARSK) are Cytoplasmic-facing. The chain crosses the membrane as a helical span at residues 19-39 (LLCFSLLYLFSTIFLFLYVSL). Over 40-462 (SRNQCIFRYS…CKNYLTDMWG (423 aa)) the chain is Lumenal. N-linked (GlcNAc...) asparagine glycans are attached at residues asparagine 121, asparagine 132, and asparagine 449.

Belongs to the alkaline ceramidase family. In terms of tissue distribution, preferentially expressed in pollen grains, pollen tubes and silique guard cells, but barely detectable in roots, stems and leaves.

It is found in the golgi apparatus membrane. It carries out the reaction an N-acylsphing-4-enine + H2O = sphing-4-enine + a fatty acid. The protein operates within lipid metabolism. Endoplasmic reticulum ceramidase that catalyzes the hydrolysis of ceramides into sphingosine and free fatty acids at alkaline pH (e.g. pH 9.5). Inactive on phytoceramide. Involved in the regulation of turgor pressure in guard cells and pollen tubes. This Arabidopsis thaliana (Mouse-ear cress) protein is Alkaline ceramidase TOD1.